We begin with the raw amino-acid sequence, 322 residues long: Tyrosine recombinase XerC (322 aa).

The Core-binding (CB) domain occupies 14–104; sequence PDLREAAAAW…ALRSFARHLD (91 aa). In terms of domain architecture, Tyr recombinase spans 125–311; sequence RLPRPLPVAA…DSARLLSAFD (187 aa). Catalysis depends on residues Arg-170, Lys-195, His-263, Arg-266, and His-289. Catalysis depends on Tyr-298, which acts as the O-(3'-phospho-DNA)-tyrosine intermediate.

It belongs to the 'phage' integrase family. XerC subfamily. Forms a cyclic heterotetrameric complex composed of two molecules of XerC and two molecules of XerD.

The protein localises to the cytoplasm. Functionally, site-specific tyrosine recombinase, which acts by catalyzing the cutting and rejoining of the recombining DNA molecules. The XerC-XerD complex is essential to convert dimers of the bacterial chromosome into monomers to permit their segregation at cell division. It also contributes to the segregational stability of plasmids. The sequence is that of Tyrosine recombinase XerC from Methylobacterium nodulans (strain LMG 21967 / CNCM I-2342 / ORS 2060).